Consider the following 857-residue polypeptide: Putative disease resistance protein At1g50180 (857 aa).

Residues 27–60 are a coiled coil; that stretch reads IGDQVKQLQDELKRLNCFLKDADEKQHESERVRN. Positions 148–461 constitute an NB-ARC domain; sequence SLREQRQSFP…AEGMVMPVKH (314 aa). 192–199 is an ATP binding site; that stretch reads GMGGLGKT. LRR repeat units lie at residues 653–678, 680–703, 754–780, and 791–816; these read MTSL…SLSK, LKRL…DVTQ, LPNL…NLEN, and MMRL…RFLK.

This sequence belongs to the disease resistance NB-LRR family.

Its function is as follows. Potential disease resistance protein. This chain is Putative disease resistance protein At1g50180, found in Arabidopsis thaliana (Mouse-ear cress).